We begin with the raw amino-acid sequence, 400 residues long: NADH dehydrogenase-like protein MT1860 (400 aa).

The protein belongs to the NADH dehydrogenase family. FAD is required as a cofactor.

In Mycobacterium tuberculosis (strain CDC 1551 / Oshkosh), this protein is NADH dehydrogenase-like protein MT1860.